The following is a 203-amino-acid chain: Holliday junction branch migration complex subunit RuvA (203 aa).

Residues 1–63 (MIFSVRGEVL…EDSMTLYGFS (63 aa)) are domain I. Positions 64 to 141 (DAENRDLFLA…GPVGASGLTV (78 aa)) are domain II. A flexible linker region spans residues 141 to 145 (VGTAA). A domain III region spans residues 146-203 (DGNAVRGSVVEALVGLGFAAKQAEEATDQVLDGELGKDGAVATSSALRAALSLLGKTR).

Belongs to the RuvA family. Homotetramer. Forms an RuvA(8)-RuvB(12)-Holliday junction (HJ) complex. HJ DNA is sandwiched between 2 RuvA tetramers; dsDNA enters through RuvA and exits via RuvB. An RuvB hexamer assembles on each DNA strand where it exits the tetramer. Each RuvB hexamer is contacted by two RuvA subunits (via domain III) on 2 adjacent RuvB subunits; this complex drives branch migration. In the full resolvosome a probable DNA-RuvA(4)-RuvB(12)-RuvC(2) complex forms which resolves the HJ.

Its subcellular location is the cytoplasm. Functionally, the RuvA-RuvB-RuvC complex processes Holliday junction (HJ) DNA during genetic recombination and DNA repair, while the RuvA-RuvB complex plays an important role in the rescue of blocked DNA replication forks via replication fork reversal (RFR). RuvA specifically binds to HJ cruciform DNA, conferring on it an open structure. The RuvB hexamer acts as an ATP-dependent pump, pulling dsDNA into and through the RuvAB complex. HJ branch migration allows RuvC to scan DNA until it finds its consensus sequence, where it cleaves and resolves the cruciform DNA. This Mycobacterium leprae (strain Br4923) protein is Holliday junction branch migration complex subunit RuvA.